The chain runs to 211 residues: Thiamine-phosphate synthase (211 aa).

4-amino-2-methyl-5-(diphosphooxymethyl)pyrimidine is bound by residues 37-41 (QLRIK) and Asn-69. Residues Asp-70 and Asp-89 each contribute to the Mg(2+) site. Ser-108 serves as a coordination point for 4-amino-2-methyl-5-(diphosphooxymethyl)pyrimidine. 134-136 (TQT) serves as a coordination point for 2-[(2R,5Z)-2-carboxy-4-methylthiazol-5(2H)-ylidene]ethyl phosphate. Lys-137 lines the 4-amino-2-methyl-5-(diphosphooxymethyl)pyrimidine pocket. Residues Gly-166 and 186 to 187 (VS) each bind 2-[(2R,5Z)-2-carboxy-4-methylthiazol-5(2H)-ylidene]ethyl phosphate.

Belongs to the thiamine-phosphate synthase family. It depends on Mg(2+) as a cofactor.

The catalysed reaction is 2-[(2R,5Z)-2-carboxy-4-methylthiazol-5(2H)-ylidene]ethyl phosphate + 4-amino-2-methyl-5-(diphosphooxymethyl)pyrimidine + 2 H(+) = thiamine phosphate + CO2 + diphosphate. It catalyses the reaction 2-(2-carboxy-4-methylthiazol-5-yl)ethyl phosphate + 4-amino-2-methyl-5-(diphosphooxymethyl)pyrimidine + 2 H(+) = thiamine phosphate + CO2 + diphosphate. It carries out the reaction 4-methyl-5-(2-phosphooxyethyl)-thiazole + 4-amino-2-methyl-5-(diphosphooxymethyl)pyrimidine + H(+) = thiamine phosphate + diphosphate. It functions in the pathway cofactor biosynthesis; thiamine diphosphate biosynthesis; thiamine phosphate from 4-amino-2-methyl-5-diphosphomethylpyrimidine and 4-methyl-5-(2-phosphoethyl)-thiazole: step 1/1. In terms of biological role, condenses 4-methyl-5-(beta-hydroxyethyl)thiazole monophosphate (THZ-P) and 2-methyl-4-amino-5-hydroxymethyl pyrimidine pyrophosphate (HMP-PP) to form thiamine monophosphate (TMP). The polypeptide is Thiamine-phosphate synthase (Salmonella choleraesuis (strain SC-B67)).